Consider the following 490-residue polypeptide: Endoglucanase 13 (490 aa).

Positions 1-26 (MSQLKNGSSQCLWTSICIVLIVMSMA) are cleaved as a signal peptide. An N-linked (GlcNAc...) asparagine glycan is attached at N6. The Nucleophile role is filled by D86. Residues H412, D464, and E473 contribute to the active site.

This sequence belongs to the glycosyl hydrolase 9 (cellulase E) family.

The protein localises to the secreted. It catalyses the reaction Endohydrolysis of (1-&gt;4)-beta-D-glucosidic linkages in cellulose, lichenin and cereal beta-D-glucans.. The polypeptide is Endoglucanase 13 (Arabidopsis thaliana (Mouse-ear cress)).